Consider the following 778-residue polypeptide: Protein translocase subunit SecA 2 (778 aa).

ATP-binding positions include Q94, G112–T116, and D501.

This sequence belongs to the SecA family. As to quaternary structure, monomer and homodimer. Part of the essential Sec protein translocation apparatus which comprises SecA, SecYEG and auxiliary proteins SecDF. Other proteins may also be involved.

It localises to the cell membrane. Its subcellular location is the cytoplasm. It carries out the reaction ATP + H2O + cellular proteinSide 1 = ADP + phosphate + cellular proteinSide 2.. Part of the Sec protein translocase complex. Interacts with the SecYEG preprotein conducting channel. Has a central role in coupling the hydrolysis of ATP to the transfer of proteins into and across the cell membrane, serving as an ATP-driven molecular motor driving the stepwise translocation of polypeptide chains across the membrane. The chain is Protein translocase subunit SecA 2 from Mycobacterium leprae (strain TN).